The sequence spans 720 residues: Mitogen-activated protein kinase 6 (720 aa).

Residue Met-1 forms a Peptide (Met-Gly) (interchain with G-Cter in ubiquitin) linkage. Residues 20–316 form the Protein kinase domain; it reads YMDLKPLGCG…AEEALSHPYM (297 aa). ATP is bound by residues 26-34 and Lys-49; that span reads LGCGGNGLV. The Proton acceptor role is filled by Asp-152. The residue at position 189 (Ser-189) is a Phosphoserine; by PAK1, PAK2 and PAK3. The short motif at 189–191 is the SEG motif element; sequence SEG. Residues 332-337 carry the FRIEDE motif motif; that stretch reads FHIEDE. Phosphoserine occurs at positions 386, 452, 554, and 556. A disordered region spans residues 638–657; the sequence is SEMLETEPVEEGKRGERGRE. Positions 647–657 are enriched in basic and acidic residues; the sequence is EEGKRGERGRE. At Ser-683 the chain carries Phosphoserine. Polar residues predominate over residues 698 to 714; sequence PSAMKSSPQIPHKTYSN. Residues 698 to 720 form a disordered region; sequence PSAMKSSPQIPHKTYSNILKHLN.

This sequence belongs to the protein kinase superfamily. CMGC Ser/Thr protein kinase family. MAP kinase subfamily. In terms of assembly, heterodimer with ERK4/MAPK4. Interacts with (via FRIEDE motif) MAPKAPK5. Interacts with UBE3A; this interaction may be indirect and mediated by HERC2, possibly via HERC2 interaction with NEURL4. Requires Mg(2+) as cofactor. In terms of processing, phosphorylated at Ser-189 by PAK1, PAK2 and PAK3 resulting in catalytic activation. Phosphorylated by MAPKAPK5 at other sites. Ubiquitination at Met-1 leads to degradation by the proteasome pathway. Highest levels within the nervous system, expressed in different tissues, mostly in skeletal muscle.

The protein localises to the cytoplasm. Its subcellular location is the nucleus. It carries out the reaction L-seryl-[protein] + ATP = O-phospho-L-seryl-[protein] + ADP + H(+). The enzyme catalyses L-threonyl-[protein] + ATP = O-phospho-L-threonyl-[protein] + ADP + H(+). Its activity is regulated as follows. Activated by phosphorylation at Ser-189. Atypical MAPK protein. Phosphorylates microtubule-associated protein 2 (MAP2) and MAPKAPK5. The precise role of the complex formed with MAPKAPK5 is still unclear, but the complex follows a complex set of phosphorylation events: upon interaction with atypical MAPKAPK5, ERK3/MAPK6 is phosphorylated at Ser-189 and then mediates phosphorylation and activation of MAPKAPK5, which in turn phosphorylates ERK3/MAPK6. May promote entry in the cell cycle. The chain is Mitogen-activated protein kinase 6 (Mapk6) from Rattus norvegicus (Rat).